The primary structure comprises 370 residues: Phosphate-binding protein PstS2 (370 aa).

A signal peptide spans 1–22 (MKFARSGAAVSLLAAGTLVLTA). Cysteine 23 carries N-palmitoyl cysteine lipidation. Residue cysteine 23 is the site of S-diacylglycerol cysteine attachment. Residues 54–56 (STA), serine 84, aspartate 102, and 191–193 (SGT) contribute to the phosphate site.

Belongs to the PstS family. In terms of assembly, the complex is composed of two ATP-binding proteins (PstB), two transmembrane proteins (PstC and PstA) and a solute-binding protein (PstS).

It is found in the cell membrane. It localises to the secreted. In terms of biological role, functions in inorganic phosphate uptake, a phosphate-binding protein, although probably not the main uptake protein under phosphate starvation. Part of the ABC transporter complex PstSACB involved in phosphate import. This Mycobacterium bovis (strain BCG / Pasteur 1173P2) protein is Phosphate-binding protein PstS2 (pstS2).